Here is a 1081-residue protein sequence, read N- to C-terminus: WD repeat-containing protein 64 (1081 aa).

14 WD repeats span residues 102-152 (DPIA…ATQK), 153-198 (GLIT…GSSQ), 199-265 (ENYF…VLDS), 266-314 (KNFK…LEDN), 315-356 (LPVR…NIST), 357-400 (KPVG…TLSL), 401-444 (LQVF…TRMI), 445-488 (QDTK…ETGL), 489-532 (QVYQ…FGSG), 533-631 (QEMK…LIVE), 632-740 (RNFS…PQSS), 741-803 (KGSK…EGRL), 804-857 (LKDM…EKKF), and 858-895 (KQLL…RLWH). A compositionally biased stretch (low complexity) spans 726 to 745 (CSSSQCESSKGPQSSKGSKQ). The tract at residues 726–757 (CSSSQCESSKGPQSSKGSKQSIHDSEVKGEQT) is disordered. The span at 746–756 (SIHDSEVKGEQ) shows a compositional bias: basic and acidic residues. The segment at 1036–1060 (DSSDGITGKKKGGHVQREKAPRRRS) is disordered. A compositionally biased stretch (basic residues) spans 1043 to 1060 (GKKKGGHVQREKAPRRRS).

The protein is WD repeat-containing protein 64 (WDR64) of Homo sapiens (Human).